Consider the following 104-residue polypeptide: L-rhamnose mutarotase (104 aa).

Residue Tyr-18 coordinates substrate. The Proton donor role is filled by His-22. Substrate-binding positions include Tyr-41 and Trp-76 to Trp-77.

This sequence belongs to the rhamnose mutarotase family. In terms of assembly, homodimer.

It localises to the cytoplasm. The catalysed reaction is alpha-L-rhamnose = beta-L-rhamnose. It functions in the pathway carbohydrate metabolism; L-rhamnose metabolism. Functionally, involved in the anomeric conversion of L-rhamnose. This chain is L-rhamnose mutarotase, found in Lachnoclostridium phytofermentans (strain ATCC 700394 / DSM 18823 / ISDg) (Clostridium phytofermentans).